The primary structure comprises 147 residues: Response regulator Rcp1 (147 aa).

The Response regulatory domain maps to 10–135 (VILLVEDSKA…DLFKMVQGIE (126 aa)). 4-aspartylphosphate is present on Asp68.

In terms of processing, phosphorylated by Cph1.

Functionally, forms a two-component system with Cph1 in which it acts as receiver substrate. This chain is Response regulator Rcp1 (rcp1), found in Synechocystis sp. (strain ATCC 27184 / PCC 6803 / Kazusa).